The following is a 334-amino-acid chain: DnaJ protein homolog 1 (334 aa).

The J domain occupies 4–68 (DFYKILGLER…KKRDIFDNYG (65 aa)). Ser-187 is subject to Phosphoserine.

It localises to the cytoplasm. This is DnaJ protein homolog 1 (DnaJ-1) from Drosophila melanogaster (Fruit fly).